Consider the following 1067-residue polypeptide: TBC1 domain family member 31 (1067 aa).

WD repeat units follow at residues 36-75, 76-119, 120-161, 162-201, 202-249, and 250-288; these read GKVVRFLHVTFDTTGDCFLAGDHHGNIYLFDISRNRFRLV, LKTG…SWMR, GHEG…KLNI, RQSVGIQKVFFLPLSNTILSCFSDDSIFAWECDTLFCKYQ, LPLP…RVIQ, and MPSQVRTIRQLEFLPDSFDGGASQTLGVLSQDGMMRFIN. The Rab-GAP TBC domain maps to 419-594; it reads EYPAKYRMFV…RLFDNIFSNH (176 aa). A coiled-coil region spans residues 724–773; sequence QQELLQKAEEQRKHVLEQEEEKLTQQRAKLAAMKRELKVKELQLLDATRR. Composition is skewed to basic and acidic residues over residues 896 to 912 and 926 to 937; these read KADAERERSRGGVEELQ and MREEAHRKKDEA. Disordered stretches follow at residues 896-955 and 1045-1067; these read KADA…HSDG and AARAKEGSSASSQTVCTPTPVSP. Composition is skewed to polar residues over residues 941–953 and 1052–1067; these read IQESLQPRPSTHS and SSASSQTVCTPTPVSP.

It localises to the cytoplasm. The protein localises to the cytoskeleton. The protein resides in the microtubule organizing center. It is found in the centrosome. Its subcellular location is the centriolar satellite. It localises to the cilium basal body. Its function is as follows. Molecular adapter which is involved in cilium biogenesis. Part of a functional complex including OFD1 a centriolar protein involved in cilium assembly. Could regulate the cAMP-dependent phosphorylation of OFD1, and its subsequent ubiquitination by PJA2 which ultimately leads to its proteasomal degradation. This Oryzias latipes (Japanese rice fish) protein is TBC1 domain family member 31.